We begin with the raw amino-acid sequence, 303 residues long: uncharacterized protein (303 aa).

Its subcellular location is the cytoplasm. This is an uncharacterized protein from Saccharomyces cerevisiae (strain ATCC 204508 / S288c) (Baker's yeast).